We begin with the raw amino-acid sequence, 410 residues long: ORC1-type DNA replication protein 4 (410 aa).

Residues 73 to 77 (TGKSL), Tyr220, and Arg232 contribute to the ATP site.

Belongs to the CDC6/cdc18 family.

Its function is as follows. Involved in regulation of DNA replication. The sequence is that of ORC1-type DNA replication protein 4 (orc4) from Halobacterium salinarum (strain ATCC 700922 / JCM 11081 / NRC-1) (Halobacterium halobium).